The chain runs to 259 residues: Troponin T, fast skeletal muscle (259 aa).

Acidic residues predominate over residues 1–36 (MSDEETEQVEEQYEEEEEAQEEEVQEEAPEPEEVQE). A disordered region spans residues 1–62 (MSDEETEQVE…EKVDFDDIQK (62 aa)). Ser2 bears the N-acetylserine mark. The residue at position 2 (Ser2) is a Phosphoserine. A compositionally biased stretch (basic and acidic residues) spans 50–62 (PEGEKVDFDDIQK). Position 78 is a phosphoserine (Ser78). Basic and acidic residues predominate over residues 101–143 (RAERAEQQRIRAEKERERQNRLAEEKARREEEDAKRRAEDDLK). The tract at residues 101–180 (RAERAEQQRI…TAREMKKKIL (80 aa)) is disordered. 3 positions are modified to phosphoserine: Ser149, Ser156, and Ser157. Over residues 171-180 (TAREMKKKIL) the composition is skewed to basic and acidic residues. At Ser193 the chain carries Phosphoserine. At Tyr209 the chain carries Phosphotyrosine. The disordered stretch occupies residues 235-259 (RIDQAQKHSKKAGATAKGKVGGRWK).

This sequence belongs to the troponin T family.

Its function is as follows. Troponin T is the tropomyosin-binding subunit of troponin, the thin filament regulatory complex which confers calcium-sensitivity to striated muscle actomyosin ATPase activity. The sequence is that of Troponin T, fast skeletal muscle (Tnnt3) from Rattus norvegicus (Rat).